The sequence spans 213 residues: MGREFLGLFEEWADSYDQSVEGYDEEYREVFANYEDILNTVASKAGSVVLEFGVGTGNLTKKLLEQGKTVYGIEPSEPMRKKAREKLGDKVLIVDGDFLQFPLPPKPIDTIVSTYAFHHLTDEEKGEAIAKYSQLLKKGDKIVFADTAFRDRQAFQRAIEEARERGFHHLADDLGREYYTTLDVLTKLFKENGFTVTFTQKNAFVWVMEAVKQ.

Positions 53, 74, and 97 each coordinate S-adenosyl-L-methionine.

Belongs to the methyltransferase superfamily. YrrT family.

Could be a S-adenosyl-L-methionine-dependent methyltransferase. This is an uncharacterized protein from Geobacillus sp. (strain WCH70).